Reading from the N-terminus, the 393-residue chain is Probable galacturonosyltransferase-like 8 (393 aa).

Over 1 to 4 the chain is Cytoplasmic; the sequence is MSSR. The chain crosses the membrane as a helical; Signal-anchor for type II membrane protein span at residues 5 to 25; that stretch reads FSLTVVCLIALLPFVVGIRLI. Topologically, residues 26–393 are lumenal; the sequence is PARITSVGDG…SELTDDSSFL (368 aa). N-linked (GlcNAc...) asparagine glycosylation occurs at N226.

This sequence belongs to the glycosyltransferase 8 family.

The protein resides in the golgi apparatus membrane. Its pathway is glycan metabolism; pectin biosynthesis. May be involved in pectin and/or xylans biosynthesis in cell walls. This chain is Probable galacturonosyltransferase-like 8 (GATL8), found in Arabidopsis thaliana (Mouse-ear cress).